A 360-amino-acid chain; its full sequence is Glutamine synthetase (360 aa).

The GS beta-grasp domain occupies 26 to 105 (IMAEYIWIDA…VLSECWNADG (80 aa)). The GS catalytic domain maps to 112–360 (YRHECAKLME…METIYGSVDN (249 aa)).

The protein belongs to the glutamine synthetase family. In terms of assembly, homooctamer.

It is found in the cytoplasm. It carries out the reaction L-glutamate + NH4(+) + ATP = L-glutamine + ADP + phosphate + H(+). This Colletotrichum gloeosporioides (Anthracnose fungus) protein is Glutamine synthetase (GLN1).